The following is a 255-amino-acid chain: MSKAFLPTILEQKGKEVSQLVMEDLQPLRQTYRLYDFLKSNQNKLQIISEVKKASPSMGDINLDVDIVAQAKTYEENGAAMISVLTDEVFFKGDISYLKEISTQVAIPTLAKDFIIDEKQIVRSRNAGATVILLIVAALPEARLKELYDFATSLGLEVLVETHNLPELEVAHRIGAEIIGVNNRNLVTFETDINTSLELSTHFKDKPVYISESAIFTGQDAALVAPYFNGILVGTALMTADNVAKKVKELQIDKG.

The protein belongs to the TrpC family.

It catalyses the reaction 1-(2-carboxyphenylamino)-1-deoxy-D-ribulose 5-phosphate + H(+) = (1S,2R)-1-C-(indol-3-yl)glycerol 3-phosphate + CO2 + H2O. It functions in the pathway amino-acid biosynthesis; L-tryptophan biosynthesis; L-tryptophan from chorismate: step 4/5. This chain is Indole-3-glycerol phosphate synthase, found in Streptococcus thermophilus (strain ATCC BAA-250 / LMG 18311).